Here is a 758-residue protein sequence, read N- to C-terminus: MGRRLSVWLCTVAALLSGAQAKGTPLLARPAQPSASRYSLYTTGWRPRLRPGPHKSLCAYVVHRNVTCVLQEGAESYIKAEYRNCGWGPNCPSTVRYRTVFRPRYKIGYKTVTDLAWRCCPGLTGESCPEHLTDHGATPPHQEPEPQIPLGQLGPGPRPSPYSREAPRPRGRKGQGPFGERLEQRLSQAYGTLSGLVASHENPNRITGDSRAPVVPIGFGVIPEGLVAPEDRGRGPLIPPLSEILSKVTEVSNTLQTKVQLLDEVRGLALGHEAHLQRLREAPPSPLTSLALLEEYVDQRLQRLWGSLLDGFEQKLQGVQSECDLRVQEVRQQCEEGQAASQRLHQSLDGRELALRRELSQLGTQLQGLTLTGGGTCCSQLALISARVDSLERNLQAVTETQGGPGTLAADELARLSAAMLQGGVDGLLEGLETINGTENGARGCCLRMEVGGWGVGGFGSTLEQRVQSLEERLATLTGELSPESAIPDRSARPLVHSELAVLEQRLVSLETSCTPSTTTAILDNLVAEVKAWQSRSEALLHQVARHTALLQQLNGTVAEVQGQLAEGTGSSLQGEITLLKVNLNSVSKSLTGLSDSVSQYSDAFSAANTSLDERERRVEAEVHTIQEQISSQGSRLQAGHRQVLNLRGELEQLKAGMANVARGLSRCRDTAQELQHTVGHFDQRVAQVEGACERLGLLATHLNSLPTEQLRSREGLWGHIDKLNHTLAQHTQDIARLRDDLLDCRAQLAEVRPGRAD.

A signal peptide spans 1–21 (MGRRLSVWLCTVAALLSGAQA). One can recognise an EMI domain in the interval 54–130 (HKSLCAYVVH…PGLTGESCPE (77 aa)). Intrachain disulfides connect Cys58-Cys120, Cys85-Cys91, and Cys119-Cys128. Asn65 carries an N-linked (GlcNAc...) asparagine glycan. The tract at residues 131-178 (HLTDHGATPPHQEPEPQIPLGQLGPGPRPSPYSREAPRPRGRKGQGPF) is disordered. The stretch at 379–401 (SQLALISARVDSLERNLQAVTET) forms a coiled coil. The N-linked (GlcNAc...) asparagine glycan is linked to Asn436. Coiled coils occupy residues 460–483 (GSTLEQRVQSLEERLATLTGELSP) and 528–567 (AEVKAWQSRSEALLHQVARHTALLQQLNGTVAEVQGQLAE). N-linked (GlcNAc...) asparagine glycosylation is found at Asn555 and Asn609. Coiled coils occupy residues 642–677 (RQVLNLRGELEQLKAGMANVARGLSRCRDTAQELQH) and 720–753 (HIDKLNHTLAQHTQDIARLRDDLLDCRAQLAEVR). N-linked (GlcNAc...) asparagine glycosylation is present at Asn725.

It is found in the secreted. The protein resides in the extracellular space. Its subcellular location is the extracellular matrix. The protein localises to the cytoplasm. The polypeptide is EMILIN-3 (Emilin3) (Mus musculus (Mouse)).